We begin with the raw amino-acid sequence, 171 residues long: O-acetyl-ADP-ribose deacetylase 2 (171 aa).

The region spanning 1–171 (MNKITVIQGD…NYDLYLKLLN (171 aa)) is the Macro domain. Substrate is bound by residues 10–11 (DI), Asn24, 32–34 (GVD), and 121–125 (STGIY). Asp34 acts as the Proton acceptor in catalysis.

Belongs to the MacroD-type family. YmdB subfamily. Homodimer. Interacts with RNase III.

The catalysed reaction is 3''-O-acetyl-ADP-D-ribose + H2O = ADP-D-ribose + acetate + H(+). The enzyme catalyses 2''-O-acetyl-ADP-D-ribose + H2O = ADP-D-ribose + acetate + H(+). Its function is as follows. Deacetylates O-acetyl-ADP ribose to yield ADP-ribose and free acetate. Down-regulates ribonuclease 3 (RNase III) activity. Acts by interacting directly with the region of the ribonuclease that is required for dimerization/activation. The protein is O-acetyl-ADP-ribose deacetylase 2 of Pantoea vagans (strain C9-1) (Pantoea agglomerans (strain C9-1)).